The chain runs to 130 residues: Succinate dehydrogenase cytochrome b556 subunit (130 aa).

Topologically, residues 1–26 (MADVNRGNRPLSPHLQVYRLPLAAIT) are cytoplasmic. The chain crosses the membrane as a helical span at residues 27–52 (SIMTRITGHALVAGIVLITWWLVAAV). Topologically, residues 53-68 (TSPGAFACADWVVRSW) are periplasmic. Residues 69–89 (LGFIILTGSMWALWYHLLAGL) traverse the membrane as a helical segment. His84 is a heme binding site. At 90–109 (RHLFYDAGYGLEIEQAHKSS) the chain is on the cytoplasmic side. A helical transmembrane segment spans residues 110-130 (QALIAGSVVLAVLTLIVFFVF).

Belongs to the cytochrome b560 family. As to quaternary structure, part of an enzyme complex containing four subunits: a flavoprotein, an iron-sulfur protein, plus two membrane-anchoring proteins, SdhC and SdhD. The complex can form homotrimers. It depends on heme as a cofactor.

The protein resides in the cell inner membrane. It participates in carbohydrate metabolism; tricarboxylic acid cycle. Membrane-anchoring subunit of succinate dehydrogenase (SDH). The polypeptide is Succinate dehydrogenase cytochrome b556 subunit (sdhC) (Paracoccus denitrificans).